We begin with the raw amino-acid sequence, 161 residues long: Arachidonate 5-lipoxygenase-activating protein (161 aa).

Topologically, residues 1–8 (MDQETVGN) are lumenal. The helical transmembrane segment at 9 to 30 (VVLLAIVTLISVVQNGFFAHKV) threads the bilayer. The Cytoplasmic portion of the chain corresponds to 31-52 (EHESRTQNGRSFQRTGTLAFER). The chain crosses the membrane as a helical span at residues 53-77 (VYTANQNCVDAYPTFLAVLWSAGLL). At 78–80 (CSQ) the chain is on the lumenal side. The helical transmembrane segment at 81–102 (VPAAFAGLMYLFVRQKYFVGYL) threads the bilayer. Over 103–107 (GERTQ) the chain is Cytoplasmic. Residues 108–115 (STPGYIFG) lie within the membrane without spanning it. The chain crosses the membrane as a helical span at residues 116–128 (KRIILFLFLMSVA). At 129-161 (GIFNYYLIFFFGSDFENYIKTISTTISPLLLIP) the chain is on the lumenal side.

This sequence belongs to the MAPEG family. As to quaternary structure, homotrimer. Interacts with LTC4S and ALOX5.

The protein localises to the nucleus membrane. It is found in the endoplasmic reticulum membrane. In terms of biological role, required for leukotriene biosynthesis by ALOX5 (5-lipoxygenase). Anchors ALOX5 to the membrane. Binds arachidonic acid, and could play an essential role in the transfer of arachidonic acid to ALOX5. Binds to MK-886, a compound that blocks the biosynthesis of leukotrienes. This chain is Arachidonate 5-lipoxygenase-activating protein (ALOX5AP), found in Homo sapiens (Human).